Here is a 237-residue protein sequence, read N- to C-terminus: Phosphoribosylaminoimidazole-succinocarboxamide synthase (237 aa).

This sequence belongs to the SAICAR synthetase family.

It catalyses the reaction 5-amino-1-(5-phospho-D-ribosyl)imidazole-4-carboxylate + L-aspartate + ATP = (2S)-2-[5-amino-1-(5-phospho-beta-D-ribosyl)imidazole-4-carboxamido]succinate + ADP + phosphate + 2 H(+). Its pathway is purine metabolism; IMP biosynthesis via de novo pathway; 5-amino-1-(5-phospho-D-ribosyl)imidazole-4-carboxamide from 5-amino-1-(5-phospho-D-ribosyl)imidazole-4-carboxylate: step 1/2. The chain is Phosphoribosylaminoimidazole-succinocarboxamide synthase from Pseudomonas fluorescens (strain Pf0-1).